The chain runs to 1374 residues: MRPLRDDAKRRADRQLSASMKPTSSNRPFSDRVPDRFKDGDDAQFDFTAPPRGMGSRDGNVHYMQQSLFSMIAAVGSKSDFHARFDESSDSDGEMEEQPRVEQTTGKASSRTPPVPSLDPRQPSKRSEPSKLVLEERGRRHQRACSDNKLLQRLPKSDAEGGVNESSNQSDSLLKVPPLRRTRSATPRAAPVLSRMVEAQSHFDLTSATPYLPPNNPDKSMEDQPQSSASALSMRLMKMFEFAKPEKVLVEYACSLLQSMLLQGYMYVTEGHICFYAYLPKKSNVAIKSGYLSKRGRKNPKYHRYWFALKGDVLSYYADPSNLYFPSGHVDLRYGISASLTERKDGDAKDFQVTTDQRTYLFRADSATSAKEWVKALQQVIFRTHNEGDSVKVSFPIANVIDLEESPMADFAETFKIRVIDSGETYAIDEYFFSFFDSGQDAFNYIKGLVNAVSTTTATKEAQDQHDIKHQPESSRTAYKRQSVSSVRVSDQRREDSPRKRSSSVGNENQGSADSFAEQGTGSSPIIQSMTDTTESASQILHRSDVFQAPTMRTLQGRSLDVGESIRRYSDDTTPSASARLDLDAAVGSPCGTLGHNETTEDARYATGQSDLMQSSRPSSVTQLNELVKAGVYPLQRAAGFAEYLKSRSKQMSTLLATESMGYIEKVSGMWIGGQKHYGEREGPLLEDQNVDPEDNEGSFNYGDRFRAHFALPPTEKLQATYYAYLHRVLPLYGKIYISQKKLCFRSLIPGTRTKMILPFKDIENVEKEKGFRFGYHGLVVIIRGHEELFFEFNASDSRDDCAVTLHQNLESVKFLVESGLLAEDERDEVEAAKAEHRMLEEARLDSPEGHDAPPTLTEDSSEIHPFFDDPRASIINFKPPEPLRITCLTIGSRGDVQPYIALCKGLLAEGHKPKIATHAEFEPWIRKHGIDFAPVDGDPAELMRICVENGMFTYSFLREASLKFRGWIDDLLSSAWIGCQGSDLLIESPSAMAGIHIAEALRIPYFRGFTMPWTRTRAYPHAFAVPENRMGGAYNYITYVMFDNIFWKAIAGQVNRWRNNELGLKATTLDKMQQNKVPFLYNYSPSVVAPPLDYPDWIRITGYWFLNEGTDWTPPTELSNFIAQARSDGKKLVYIGFGSIVVSDPSALTRTVIESVLKADVRCILSKGWSDRLGDPASTKTEIPLPPEILQIQSAPHDWLFSQIDAAAHHGGAGTTGASLRAGVPTIVKPFFGDQFFFGSRVEDLGVGICMKKLNVSVFSRALWEATHSERMIVKARNLGIQIRNEDGVATAIQALYRDLEYAKTLARQKSLASSTPFSPTPTAKASPDGGDDDLDDIEEWTFVGDETGFDIAKRMRERAASDADRIGSNMFQ.

Over residues 1 to 14 the composition is skewed to basic and acidic residues; sequence MRPLRDDAKRRADR. Disordered stretches follow at residues 1-60, 83-190, and 206-227; these read MRPL…RDGN, ARFD…PRAA, and TSAT…QPQS. The span at 16-28 shows a compositional bias: polar residues; it reads LSASMKPTSSNRP. A compositionally biased stretch (basic and acidic residues) spans 29–41; it reads FSDRVPDRFKDGD. A compositionally biased stretch (polar residues) spans 101-112; the sequence is VEQTTGKASSRT. Over residues 125 to 138 the composition is skewed to basic and acidic residues; that stretch reads KRSEPSKLVLEERG. The 50-residue stretch at 234–283 folds into the GRAM 1 domain; that stretch reads MRLMKMFEFAKPEKVLVEYACSLLQSMLLQGYMYVTEGHICFYAYLPKKS. The region spanning 285–382 is the PH domain; sequence VAIKSGYLSK…WVKALQQVIF (98 aa). The interval 458–538 is disordered; it reads ATKEAQDQHD…SMTDTTESAS (81 aa). Composition is skewed to basic and acidic residues over residues 461–473 and 490–499; these read EAQD…HQPE and SDQRREDSPR. The span at 503–538 shows a compositional bias: polar residues; the sequence is SSVGNENQGSADSFAEQGTGSSPIIQSMTDTTESAS. The GRAM 2 domain maps to 704–770; that stretch reads DRFRAHFALP…KDIENVEKEK (67 aa). Serine 893, arginine 894, aspartate 896, alanine 1196, histidine 1198, histidine 1211, glycine 1215, threonine 1216, aspartate 1235, and glutamine 1236 together coordinate UDP-alpha-D-glucose. Residues 1314 to 1325 are compositionally biased toward polar residues; the sequence is ASSTPFSPTPTA. Positions 1314–1338 are disordered; the sequence is ASSTPFSPTPTAKASPDGGDDDLDD.

Belongs to the glycosyltransferase 28 family.

Its subcellular location is the cytoplasm. It is found in the preautophagosomal structure membrane. It catalyses the reaction a sterol + UDP-alpha-D-glucose = a sterol 3-beta-D-glucoside + UDP + H(+). The enzyme catalyses ergosterol + UDP-alpha-D-glucose = ergosteryl 3-beta-D-glucoside + UDP + H(+). Functionally, sterol glycosyltransferase responsible for the glycosylation of ergosterol to form ergosterol-glucoside. The sequence is that of Sterol 3-beta-glucosyltransferase from Penicillium rubens (strain ATCC 28089 / DSM 1075 / NRRL 1951 / Wisconsin 54-1255) (Penicillium chrysogenum).